The primary structure comprises 233 residues: 2,3,4,5-tetrahydropyridine-2,6-dicarboxylate N-acetyltransferase (233 aa).

Belongs to the transferase hexapeptide repeat family. DapH subfamily.

The catalysed reaction is (S)-2,3,4,5-tetrahydrodipicolinate + acetyl-CoA + H2O = L-2-acetamido-6-oxoheptanedioate + CoA. The protein operates within amino-acid biosynthesis; L-lysine biosynthesis via DAP pathway; LL-2,6-diaminopimelate from (S)-tetrahydrodipicolinate (acetylase route): step 1/3. Its function is as follows. Catalyzes the transfer of an acetyl group from acetyl-CoA to tetrahydrodipicolinate. This is 2,3,4,5-tetrahydropyridine-2,6-dicarboxylate N-acetyltransferase from Oenococcus oeni (strain ATCC BAA-331 / PSU-1).